Consider the following 205-residue polypeptide: uncharacterized protein (205 aa).

Active-site charge relay system residues include Ser119 and His160.

Belongs to the peptidase S51 family.

This is an uncharacterized protein from Listeria monocytogenes serovar 1/2a (strain ATCC BAA-679 / EGD-e).